The sequence spans 332 residues: Phosphate acyltransferase (332 aa).

It belongs to the PlsX family. Homodimer. Probably interacts with PlsY.

It localises to the cytoplasm. It catalyses the reaction a fatty acyl-[ACP] + phosphate = an acyl phosphate + holo-[ACP]. It participates in lipid metabolism; phospholipid metabolism. Its function is as follows. Catalyzes the reversible formation of acyl-phosphate (acyl-PO(4)) from acyl-[acyl-carrier-protein] (acyl-ACP). This enzyme utilizes acyl-ACP as fatty acyl donor, but not acyl-CoA. The polypeptide is Phosphate acyltransferase (Thermoanaerobacter pseudethanolicus (strain ATCC 33223 / 39E) (Clostridium thermohydrosulfuricum)).